The primary structure comprises 260 residues: Flap endonuclease Xni (260 aa).

Position 105 (D105) interacts with Mg(2+). One can recognise a 5'-3' exonuclease domain in the interval S164–A254. 5 residues coordinate K(+): L172, A173, P181, I183, and I186. The tract at residues G185–S190 is interaction with DNA.

This sequence belongs to the Xni family. Mg(2+) is required as a cofactor. The cofactor is K(+).

Has flap endonuclease activity. During DNA replication, flap endonucleases cleave the 5'-overhanging flap structure that is generated by displacement synthesis when DNA polymerase encounters the 5'-end of a downstream Okazaki fragment. This Shewanella sp. (strain ANA-3) protein is Flap endonuclease Xni.